A 517-amino-acid polypeptide reads, in one-letter code: Amidophosphoribosyltransferase (517 aa).

Methionine 1 carries the N-acetylmethionine modification. The propeptide occupies 1 to 11; sequence MELEELGIREE. Cysteine 12 serves as the catalytic Nucleophile. A Glutamine amidotransferase type-2 domain is found at 12-261; sequence CGVFGCIASG…PGEIVEISRH (250 aa). Residue cysteine 280 coordinates [4Fe-4S] cluster. Residues serine 327, aspartate 389, and aspartate 390 each contribute to the Mg(2+) site. The [4Fe-4S] cluster site is built by cysteine 426, cysteine 503, and cysteine 506.

The protein in the C-terminal section; belongs to the purine/pyrimidine phosphoribosyltransferase family. As to quaternary structure, homotetramer. It depends on Mg(2+) as a cofactor. [4Fe-4S] cluster serves as cofactor. Ubiquitously expressed.

The catalysed reaction is 5-phospho-beta-D-ribosylamine + L-glutamate + diphosphate = 5-phospho-alpha-D-ribose 1-diphosphate + L-glutamine + H2O. It participates in purine metabolism; IMP biosynthesis via de novo pathway; N(1)-(5-phospho-D-ribosyl)glycinamide from 5-phospho-alpha-D-ribose 1-diphosphate: step 1/2. Functionally, catalyzes the formation of phosphoribosylamine from phosphoribosylpyrophosphate (PRPP) and glutamine. In Homo sapiens (Human), this protein is Amidophosphoribosyltransferase (PPAT).